The sequence spans 911 residues: MTEGKSIINANLTPLPDKVGVDGLEDKWRTVWDEDGTYKFRNTRDRKAVYSIDTPPPTVSGSLHVGHVFSYTHTDVIARYKRMRGYDVFYPMGWDDNGLPTERRVQNYYGVRVDVSLPYDPDFKPPFEGTDGKKIDAKDQVPISRKNFIELCERLTAQDEKLFEALWRKLGLSIDWSQTYHTIGQHPQRVAQKAFLRNLARGEAYQQDAPGLWDVTFQTAVAQAELESREYPGFYHKVAFRFEDGTPIYIETTRPELLAACTSLIANPNDERYKQYFGQYVYSPLFKVKVPILAHPAAEMDKGAGIAMCCTFGDVTDVEWWRDLKLPTRPIIQRNGRIVMDTPDWIEDPAGREVFAETAGKTTFSARKIIVDKLRESGDLDGEPTPTKRMTNFYEKGDKPLEIVTSRQWYLKNGGTDAKLNAELIERGKELEFHPDFMRVRYENWVHGLNGDWLISRQRFFGVPFPLWYPVNASGEPDYDHPITPSEDRLPIDPTIDVPEGYDESQRDVPGGFTAEKDIMDTWATSSLTPQIVTHWAEPDEASKALFASTFPMDLRPQGQDIIRTWLFSTVDRAHLENKCLPWAHATLSGWILDPDHKKMSKSKGNVVVPNEPIEKFGADAVRYWAAAARLGLDATYDIGQMKIGRRLAIKLLNATKFALAIGREDENHHVGAAAEAAWNPADVTEPLDRAAMAKLALVVRQATEALESYEHSKALEVIESYFWQFCDDYIELVKNRAYGTPDEHGNVPSEKAVKSARTALGLGLDAFARLLAPYLPYATEEVWSWMHAGSGSVHRAAWPVVDPYVEAATGASPELLTWAGKAVEQLRKIKSEAKVSMKTPILSVALSAASEGVEAIHAALGDIAQAGRVVGKFDLVAKHAEESAAEGTPETEVAVEASELGEPPAKKPKH.

The short motif at 57–67 is the 'HIGH' region element; it reads PTVSGSLHVGH. The short motif at 599–603 is the 'KMSKS' region element; that stretch reads KMSKS. Residue Lys602 participates in ATP binding. Residues 882–911 are disordered; sequence EESAAEGTPETEVAVEASELGEPPAKKPKH.

The protein belongs to the class-I aminoacyl-tRNA synthetase family. ValS type 2 subfamily. Monomer.

Its subcellular location is the cytoplasm. It carries out the reaction tRNA(Val) + L-valine + ATP = L-valyl-tRNA(Val) + AMP + diphosphate. Functionally, catalyzes the attachment of valine to tRNA(Val). As ValRS can inadvertently accommodate and process structurally similar amino acids such as threonine, to avoid such errors, it has a 'posttransfer' editing activity that hydrolyzes mischarged Thr-tRNA(Val) in a tRNA-dependent manner. In Bifidobacterium longum (strain NCC 2705), this protein is Valine--tRNA ligase.